We begin with the raw amino-acid sequence, 804 residues long: MDAQEKKYDASAITVLEGLQAVRERPGMYIGDTGVTGLHHLVYEVVDNSIDEAMAGFCTEVVVRILEDGGISVSDNGRGIPVQIHEKESAKQGREISALEVVLTVLHAGGKFDKDSYKVSGGLHGVGVSCVNALSEKFIANVFKDGQAYSMEFSKGAPLTALQVLGSTDKRGTEILFYPDPTVFSTCVFDRAILMKRLRELAFLNRGITIIFEDDRDAGFDKVTFFYEGGIQSFVSYLNQNKESLFPTPIYIQGSKRGDDGDIEFEAALQWNSGYSELIYSYANNIPTRQGGTHLTGFSTALTRAVNSYIKSHNLAKSDKLSLTGEDIREGLVAIVSVKVPNPQFEGQTKQKLGNSDVGSVAQQISGEVLTTFFEENPQIAKTIVDKVFVAAQAREAAKRARELTIRKSALDSARLPGKLVDCLEKDPEKCEMYIVEGDSAGGSAKQGRDRRFQAILPIRGKILNVEKARLQKIFQNQEIGSIIAALGCGIGTDNFNLSKLRYKRVIIMTDADVDGSHIRTLLLTFFYRHMSALIENGCVYIAQPPLYRVSKKKDFRYILSEKEMDGYLLNLGTRESRVVFDDTARELEGTALESFVNLILEVESFIIALEKRAIPFSEFLDMFRDGAYPLYYYPPESGKQGGNYLYSNEEKEAAVAANEEAAARIIELYKASAFEEIQHNLNEYGYDIRHYLHPKGTGITVSTEDSKTPNYTCYTLKEVIDYLKGLGRKGIEIQRYKGLGEMNADQLWDTTMNPEQRTLVRVSLKDAVEADHIFTMLMGEEVPPRREFIESHALSIRMSNLDI.

The region spanning 431-546 is the Toprim domain; sequence CEMYIVEGDS…NGCVYIAQPP (116 aa). Mg(2+) is bound by residues glutamate 437, aspartate 511, and aspartate 513.

It belongs to the type II topoisomerase GyrB family. As to quaternary structure, heterotetramer, composed of two GyrA and two GyrB chains. In the heterotetramer, GyrA contains the active site tyrosine that forms a transient covalent intermediate with DNA, while GyrB binds cofactors and catalyzes ATP hydrolysis. Mg(2+) is required as a cofactor. The cofactor is Mn(2+). Ca(2+) serves as cofactor.

It localises to the cytoplasm. The catalysed reaction is ATP-dependent breakage, passage and rejoining of double-stranded DNA.. A type II topoisomerase that negatively supercoils closed circular double-stranded (ds) DNA in an ATP-dependent manner to modulate DNA topology and maintain chromosomes in an underwound state. Negative supercoiling favors strand separation, and DNA replication, transcription, recombination and repair, all of which involve strand separation. Also able to catalyze the interconversion of other topological isomers of dsDNA rings, including catenanes and knotted rings. Type II topoisomerases break and join 2 DNA strands simultaneously in an ATP-dependent manner. The sequence is that of DNA gyrase subunit B from Chlamydia muridarum (strain MoPn / Nigg).